Reading from the N-terminus, the 466-residue chain is Cysteine--tRNA ligase (466 aa).

Residue C30 participates in Zn(2+) binding. The short motif at 32-42 (PTVYNYIHIGN) is the 'HIGH' region element. Zn(2+) is bound by residues C210, H235, and E239. Positions 267 to 271 (KMSKS) match the 'KMSKS' region motif. An ATP-binding site is contributed by K270. S271 carries the phosphoserine modification.

This sequence belongs to the class-I aminoacyl-tRNA synthetase family. In terms of assembly, monomer. Zn(2+) is required as a cofactor.

It localises to the cytoplasm. It catalyses the reaction tRNA(Cys) + L-cysteine + ATP = L-cysteinyl-tRNA(Cys) + AMP + diphosphate. This Geobacillus sp. (strain WCH70) protein is Cysteine--tRNA ligase.